A 372-amino-acid chain; its full sequence is Ribosomal RNA small subunit methyltransferase H (372 aa).

S-adenosyl-L-methionine is bound by residues 78 to 80 (GGH), D97, Y124, D148, and Q155.

This sequence belongs to the methyltransferase superfamily. RsmH family.

It is found in the cytoplasm. It carries out the reaction cytidine(1402) in 16S rRNA + S-adenosyl-L-methionine = N(4)-methylcytidine(1402) in 16S rRNA + S-adenosyl-L-homocysteine + H(+). Specifically methylates the N4 position of cytidine in position 1402 (C1402) of 16S rRNA. The protein is Ribosomal RNA small subunit methyltransferase H of Mycobacterium leprae (strain Br4923).